Consider the following 456-residue polypeptide: Argininosuccinate lyase (456 aa).

It belongs to the lyase 1 family. Argininosuccinate lyase subfamily.

The protein localises to the cytoplasm. The enzyme catalyses 2-(N(omega)-L-arginino)succinate = fumarate + L-arginine. The protein operates within amino-acid biosynthesis; L-arginine biosynthesis; L-arginine from L-ornithine and carbamoyl phosphate: step 3/3. This chain is Argininosuccinate lyase, found in Carboxydothermus hydrogenoformans (strain ATCC BAA-161 / DSM 6008 / Z-2901).